The primary structure comprises 250 residues: 5'-nucleotidase SurE (250 aa).

A divalent metal cation-binding residues include Asp8, Asp9, Ser39, and Asn95.

This sequence belongs to the SurE nucleotidase family. The cofactor is a divalent metal cation.

It localises to the cytoplasm. The catalysed reaction is a ribonucleoside 5'-phosphate + H2O = a ribonucleoside + phosphate. Nucleotidase that shows phosphatase activity on nucleoside 5'-monophosphates. The sequence is that of 5'-nucleotidase SurE from Cupriavidus pinatubonensis (strain JMP 134 / LMG 1197) (Cupriavidus necator (strain JMP 134)).